We begin with the raw amino-acid sequence, 628 residues long: MTELDYSKIGLKVGLEIHQQLNTAHKLFCECPTTLHEEYHTQLERYLRPSFSELGEIDIAALFEWQKGKKYVYRVPPNSCLVECDEEPPHIIDEEALSIAVAVSLALHSTLVDEVYVMRKIVIDGSNTSGFQRTAIISLGGYIEDNGQRIGIQTIALEEDAARKITDSPTEIIYNLDRLGIPLIEISTAPDIKTPEQAERVALKIGQLLRLTGRVKRGIGTIRQDLNVSIQGGVKTEIKGVQLLELIPDIIKNEARRQYELLRIKEELQKRNLNKDIVKNSFKIVDLTEEFKDTNSKIIRKELEKNGRIYGLKIAGFKGIFGWQLMPNRRFGTEVADYVRALAGLGGLFHSDELPNYGITKEEVEKVRKILQINENDAFIIIVGPKEKLDIATNTILDRILYAFDGVPKETRAALDDGTTKFMRPQPGSARMYPETDIPPRRIDERILELSKQFVPEQPEIKLKKLIELGLSKDLANTMLNSLRLDLFEELVKKYSPKVSPTFIASTLEITVKYVKSKGGDISVITDNILEELIKYVYEDKISKDAVQEILLELATSKTQLNEIIKKYTPLNETELEKIIIETIEENKKEIENKKDKAFNIIMSKVMNKVRGRADSKKVIELIKKHLG.

This sequence belongs to the GatB/GatE family. GatE subfamily. In terms of assembly, heterodimer of GatD and GatE.

It carries out the reaction L-glutamyl-tRNA(Gln) + L-glutamine + ATP + H2O = L-glutaminyl-tRNA(Gln) + L-glutamate + ADP + phosphate + H(+). In terms of biological role, allows the formation of correctly charged Gln-tRNA(Gln) through the transamidation of misacylated Glu-tRNA(Gln) in organisms which lack glutaminyl-tRNA synthetase. The reaction takes place in the presence of glutamine and ATP through an activated gamma-phospho-Glu-tRNA(Gln). The GatDE system is specific for glutamate and does not act on aspartate. The sequence is that of Glutamyl-tRNA(Gln) amidotransferase subunit E from Sulfurisphaera tokodaii (strain DSM 16993 / JCM 10545 / NBRC 100140 / 7) (Sulfolobus tokodaii).